A 237-amino-acid chain; its full sequence is Orotidine 5'-phosphate decarboxylase (237 aa).

Substrate contacts are provided by residues D11, K34, 61–70, T124, R186, Q195, G215, and R216; that span reads DLKLHDIPNT. K63 (proton donor) is an active-site residue.

It belongs to the OMP decarboxylase family. Type 1 subfamily. In terms of assembly, homodimer.

The catalysed reaction is orotidine 5'-phosphate + H(+) = UMP + CO2. The protein operates within pyrimidine metabolism; UMP biosynthesis via de novo pathway; UMP from orotate: step 2/2. Its function is as follows. Catalyzes the decarboxylation of orotidine 5'-monophosphate (OMP) to uridine 5'-monophosphate (UMP). The sequence is that of Orotidine 5'-phosphate decarboxylase from Lactococcus lactis subsp. cremoris (strain MG1363).